The chain runs to 776 residues: MSSTRSQNPHGLKQIGLDQIWDDLRAGIQQVYTRQSMAKSRYMELYTHVYNYCTSVHQSNQARGAGVPPSKSKKGQTPGGAQFVGLELYKRLKEFLKNYLTNLLKDGEDLMDESVLKFYTQQWEDYRFSSKVLNGICAYLNRHWVRRECDEGRKGIYEIYSLALVTWRDCLFRPLNKQVTNAVLKLIEKERNGETINTRLISGVVQSYVELGLNEDDAFAKGPTLTVYKESFESQFLADTERFYTRESTEFLQQNPVTEYMKKAEARLLEEQRRVQVYLHESTQDELARKCEQVLIEKHLEIFHTEFQNLLDADKNEDLGRMYNLVSRIQDGLGELKKLLETHIHNQGLAAIEKCGEAALNDPKMYVQTVLDVHKKYNALVMSAFNNDAGFVAALDKACGRFINNNAVTKMAQSSSKSPELLARYCDSLLKKSSKNPEEAELEDTLNQVMVVFKYIEDKDVFQKFYAKMLAKRLVHQNSASDDAEASMISKLKQACGFEYTSKLQRMFQDIGVSKDLNEQFKKHLTNSEPLDLDFSIQVLSSGSWPFQQSCTFALPSELERSYQRFTAFYASRHSGRKLTWLYQLSKGELVTNCFKNRYTLQASTFQMAILLQYNTEDAYTVQQLTDSTQIKMDILAQVLQILLKSKLLVLEDENANVDEVELKPDTLIKLYLGYKNKKLRVNINVPMKTEQKQEQETTHKNIEEDRKLLIQAAIVRIMKMRKVLKHQQLLGEVLTQLSSRFKPRVPVIKKCIDILIEKEYLERVDGEKDTYSYLA.

Omega-N-methylarginine is present on Arg-63. In terms of domain architecture, Cullin neddylation spans Asp-706–Asp-766. Lys-720 is covalently cross-linked (Glycyl lysine isopeptide (Lys-Gly) (interchain with G-Cter in NEDD8)).

This sequence belongs to the cullin family. As to quaternary structure, component of multiple Cul1-RING E3 ubiquitin-protein ligase complexes commonly known as SCF (SKP1-CUL1-F-box) complexes, consisting of CUL1, SKP1, RBX1 and a variable F-box domain-containing protein as substrate-specific subunit. Component of the SCF(FBXW11) complex containing FBXW11. Component of the SCF(SKP2) complex containing SKP2, in which it interacts directly with SKP1, SKP2 and RBX1. Component of the SCF(FBXW2) complex containing FBXW2. Component of the SCF(FBXO32) complex containing FBXO32. Component of the probable SCF(FBXO7) complex containing FBXO7. Component of the SCF(FBXO10) complex containing FBXO10. Component of the SCF(FBXO11) complex containing FBXO11. Component of the SCF(FBXO25) complex containing FBXO25. Component of the SCF(FBXO33) complex containing FBXO33. Component of the probable SCF(FBXO4) complex containing FBXO4. Component of the SCF(FBXO44) complex, composed of SKP1, CUL1 and FBXO44. Component of the SCF(BTRC) complex, composed of SKP1, CUL1 and BTRC. This complex binds phosphorylated NFKBIA. Part of a SCF complex consisting of CUL1, RBX1, SKP1 and FBXO2. Component of a SCF(SKP2)-like complex containing CUL1, SKP1, TRIM21 and SKP2. Component of the SCF(FBXO17) complex, composed of SKP1, CUL1 and FBXO17. Component of the SCF(FBXO27) complex, composed of SKP1, CUL1 and FBXO27. Component of the SCF(CCNF) complex consisting of CUL1, RBX1, SKP1 and CCNF. Interacts with CCNF. Component of the SCF(FBXL3) complex composed of CUL1, SKP1, RBX1 and FBXL3. Component of the SCF(FBXL21) complex composed of CUL1, SKP1, RBX1 and FBXL21. Component of the SCF(FBXO9) composed of CUL1, SKP1, RBX1 and FBXO9. Component of the SCF(FBXW7) composed of CUL1, SKP1, RBX1 and FBXW7. Component of the SCF(FBXO31) complex composed of CUL1, SKP1, RBX1 and FBXO31. Interacts with CHEK2; mediates CHEK2 ubiquitination and regulates its function. Part of a complex with TIP120A/CAND1 and RBX1. The unneddylated form interacts with TIP120A/CAND1 and the interaction mediates the exchange of the F-box substrate-specific subunit. Can self-associate. Interacts with FBXW8. Interacts with RNF7. Interacts with TRIM21. Interacts with COPS2. Interacts with UBE2M. Identified in a complex with RBX1 and GLMN. Interacts with CEP68 as part of the SCF(FBXW11) complex; the interaction is probably mediated by FBXW11 and the complex also contains CDK5RAP2 and PCNT. Interacts (when neddylated) with ARIH1; leading to activate the E3 ligase activity of ARIH1. Interacts with COPS9 isoform 2. Interacts with UBXN1. Interacts with KAT7, probably as part of an SCF complex; the interaction mediates KAT7 ubiquitination. Interacts with NOTCH2. Part of a complex that contains DCUN1D5, CUL1 and RBX1; this complex is bridged by CUL1. Interacts (unneddylated form) with DCUN1D1, DCUN1D2, DCUN1D3, DCUN1D4 and DCUN1D5; these interactions promote the cullin neddylation. Interacts (via the C-terminal domain) with CUL7; the interaction seems to be mediated by FBXW8; it is likely specific to FBXW8, but not other F-box proteins. Interacts with UBR2, as part of SCF(BTRC) complex; the interaction mediates 'Lys-48'-linked ubiquitination of UBR2 and is regulated by DUSP22 in the T-cell receptor signaling pathway. (Microbial infection) Interacts with Epstein-Barr virus BPLF1. In terms of assembly, (Microbial infection) Interacts with Human adenovirus early E1A protein; this interaction inhibits RBX1-CUL1-dependent elongation reaction of ubiquitin chains by the SCF(FBXW7) complex. As to quaternary structure, (Microbial infection) Interacts with vaccinia virus protein C9L. (Microbial infection) Interacts with Epstein-Barr virus (EBV) tegument protein BGLF2; this interaction might facilitate CUL1 recruitment to STAT2, leading to ubiquitination and degradation of the latter. Neddylated; which enhances the ubiquitination activity of SCF. Neddylation prevents binding of the inhibitor CAND1. Neddylation leads to structural rearrangment in the complex that allows interaction between the E2 ubiquitin-conjugating enzyme and the acceptor ubiquitin. Deneddylated via its interaction with the COP9 signalosome (CSN) complex. In terms of processing, (Microbial infection) Deneddylated by Epstein-Barr virus BPLF1 leading to a S-phase-like environment that is required for efficient replication of the viral genome. As to expression, expressed in lung fibroblasts.

It functions in the pathway protein modification; protein ubiquitination. Its function is as follows. Core component of multiple cullin-RING-based SCF (SKP1-CUL1-F-box protein) E3 ubiquitin-protein ligase complexes, which mediate the ubiquitination of proteins involved in cell cycle progression, signal transduction and transcription. SCF complexes and ARIH1 collaborate in tandem to mediate ubiquitination of target proteins. In the SCF complex, serves as a rigid scaffold that organizes the SKP1-F-box protein and RBX1 subunits. May contribute to catalysis through positioning of the substrate and the ubiquitin-conjugating enzyme. The E3 ubiquitin-protein ligase activity of the complex is dependent on the neddylation of the cullin subunit and exchange of the substrate recognition component is mediated by TIP120A/CAND1. The functional specificity of the SCF complex depends on the F-box protein as substrate recognition component. SCF(BTRC) and SCF(FBXW11) direct ubiquitination of CTNNB1 and participate in Wnt signaling. SCF(FBXW11) directs ubiquitination of phosphorylated NFKBIA. SCF(BTRC) directs ubiquitination of NFKBIB, NFKBIE, ATF4, SMAD3, SMAD4, CDC25A, FBXO5 and probably NFKB2. SCF(BTRC) and/or SCF(FBXW11) direct ubiquitination of CEP68. SCF(SKP2) directs ubiquitination of phosphorylated CDKN1B/p27kip and is involved in regulation of G1/S transition. SCF(SKP2) directs ubiquitination of ORC1, CDT1, RBL2, ELF4, CDKN1A, RAG2, FOXO1A, and probably MYC and TAL1. SCF(FBXW7) directs ubiquitination of CCNE1, NOTCH1 released notch intracellular domain (NICD), and probably PSEN1. SCF(FBXW2) directs ubiquitination of GCM1. SCF(FBXO32) directs ubiquitination of MYOD1. SCF(FBXO7) directs ubiquitination of BIRC2 and DLGAP5. SCF(FBXO33) directs ubiquitination of YBX1. SCF(FBXO1) directs ubiquitination of BCL6 and DTL but does not seem to direct ubiquitination of TP53. SCF(BTRC) mediates the ubiquitination of NFKBIA at 'Lys-21' and 'Lys-22'; the degradation frees the associated NFKB1-RELA dimer to translocate into the nucleus and to activate transcription. SCF(CCNF) directs ubiquitination of CCP110. SCF(FBXL3) and SCF(FBXL21) direct ubiquitination of CRY1 and CRY2. SCF(FBXO9) directs ubiquitination of TTI1 and TELO2. SCF(FBXO10) directs ubiquitination of BCL2. Neddylated CUL1-RBX1 ubiquitinates p53/TP53 recruited by Cul7-RING(FBXW8) complex. SCF(BTRC) directs 'Lys-48'-linked ubiquitination of UBR2 in the T-cell receptor signaling pathway. The SCF(FBXO31) protein ligase complex specifically mediates the ubiquitination of proteins amidated at their C-terminus in response to oxidative stress. In Homo sapiens (Human), this protein is Cullin-1 (CUL1).